Consider the following 325-residue polypeptide: Replication factor C small subunit (325 aa).

Residue 52–59 participates in ATP binding; the sequence is GPAGVGKT.

Belongs to the activator 1 small subunits family. RfcS subfamily. In terms of assembly, heteromultimer composed of small subunits (RfcS) and large subunits (RfcL).

Functionally, part of the RFC clamp loader complex which loads the PCNA sliding clamp onto DNA. The polypeptide is Replication factor C small subunit (Natronomonas pharaonis (strain ATCC 35678 / DSM 2160 / CIP 103997 / JCM 8858 / NBRC 14720 / NCIMB 2260 / Gabara) (Halobacterium pharaonis)).